The chain runs to 62 residues: MDVKELRNQSVSALNEMLIKLLKEHFEFRMQHKSSQLDNFSKLGKTKKSIAQIKTIIRQKQA.

It belongs to the universal ribosomal protein uL29 family.

The polypeptide is Large ribosomal subunit protein uL29 (Vesicomyosocius okutanii subsp. Calyptogena okutanii (strain HA)).